A 913-amino-acid polypeptide reads, in one-letter code: Protein SEY1 homolog (913 aa).

Residues 1-825 (MANASKTQII…ETGGQMSLKN (825 aa)) lie on the Cytoplasmic side of the membrane. The 256-residue stretch at 33–288 (GFNYNVIAIL…IPADGFAQYC (256 aa)) folds into the GB1/RHD3-type G domain. 43 to 50 (GSQSSGKS) provides a ligand contact to GTP. 2 disordered regions span residues 89-108 (AGGSSEGTDAESKNKSGDKP) and 436-455 (TEQDDNLSNMDKSGESAKKG). Coiled coils occupy residues 636 to 659 (DDENNNFDEIDTEIDQSKNDMESL) and 703 to 727 (IEIIIDALKIKLDEISNDIANVIIN). The helical transmembrane segment at 826-846 (VPFAFWVILLILGWNEILMFT) threads the bilayer. The Lumenal portion of the chain corresponds to 847–849 (RLF). The helical transmembrane segment at 850–870 (FRLNIILPMFMAFIIIVGSCL) threads the bilayer. Residues 871 to 913 (YTGNAQVLSYLNKIAFIVIKHSYNFYKHLQTVGNQPTKPEKVD) lie on the Cytoplasmic side of the membrane.

It belongs to the TRAFAC class dynamin-like GTPase superfamily. GB1/RHD3 GTPase family. RHD3 subfamily.

Its subcellular location is the endoplasmic reticulum membrane. Probable GTP-binding protein involved in generating and maintaining the structure of the tubular endoplasmic reticulum network. This Plasmodium chabaudi chabaudi protein is Protein SEY1 homolog.